The chain runs to 425 residues: uncharacterized protein (425 aa).

The CHY-type zinc finger occupies lysine 135 to asparagine 202. Positions 142, 144, 153, 156, 162, 165, 166, 172, 184, 187, 197, 200, 209, 212, 225, 226, 229, 232, 244, 245, 248, 251, 260, and 262 each coordinate Zn(2+). A CTCHY-type zinc finger spans residues methionine 204–asparagine 270. Residues cysteine 271–tyrosine 313 form an RING-type; atypical zinc finger.

This is an uncharacterized protein from Schizosaccharomyces pombe (strain 972 / ATCC 24843) (Fission yeast).